The sequence spans 407 residues: Imidazolonepropionase (407 aa).

Histidine 73 and histidine 75 together coordinate Fe(3+). Residues histidine 73 and histidine 75 each coordinate Zn(2+). Arginine 82, tyrosine 145, and histidine 178 together coordinate 4-imidazolone-5-propanoate. Residue tyrosine 145 participates in N-formimidoyl-L-glutamate binding. Histidine 243 lines the Fe(3+) pocket. A Zn(2+)-binding site is contributed by histidine 243. Position 246 (glutamine 246) interacts with 4-imidazolone-5-propanoate. Aspartate 318 provides a ligand contact to Fe(3+). Aspartate 318 contributes to the Zn(2+) binding site. Residues asparagine 320 and glycine 322 each coordinate N-formimidoyl-L-glutamate. Residue threonine 323 participates in 4-imidazolone-5-propanoate binding.

This sequence belongs to the metallo-dependent hydrolases superfamily. HutI family. It depends on Zn(2+) as a cofactor. Requires Fe(3+) as cofactor.

The protein localises to the cytoplasm. The enzyme catalyses 4-imidazolone-5-propanoate + H2O = N-formimidoyl-L-glutamate. Its pathway is amino-acid degradation; L-histidine degradation into L-glutamate; N-formimidoyl-L-glutamate from L-histidine: step 3/3. Catalyzes the hydrolytic cleavage of the carbon-nitrogen bond in imidazolone-5-propanoate to yield N-formimidoyl-L-glutamate. It is the third step in the universal histidine degradation pathway. The protein is Imidazolonepropionase of Serratia proteamaculans (strain 568).